Reading from the N-terminus, the 120-residue chain is Basic phospholipase A2 Cc2-PLA2 (120 aa).

7 cysteine pairs are disulfide-bonded: Cys26–Cys113, Cys28–Cys44, Cys43–Cys95, Cys49–Cys120, Cys50–Cys88, Cys57–Cys81, and Cys75–Cys86. Residues Tyr27, Gly29, and Gly31 each contribute to the Ca(2+) site. His47 is an active-site residue. Asp48 contributes to the Ca(2+) binding site. The active site involves Asp89.

The protein belongs to the phospholipase A2 family. Group II subfamily. D49 sub-subfamily. In terms of assembly, monomer. It depends on Ca(2+) as a cofactor. As to expression, expressed by the venom gland.

It localises to the secreted. It catalyses the reaction a 1,2-diacyl-sn-glycero-3-phosphocholine + H2O = a 1-acyl-sn-glycero-3-phosphocholine + a fatty acid + H(+). Basic phospholipase A2 that inhibits ADP-, thrombin- and arachidonic acid-induced platelet aggregation. It also exhibits anticoagulant effects upon human plasma in vitro. It induces a high hemolytic activity reaching its maximum after 24 hours. It induces a marked elevation of plasmatic levels of interleukin-6 and -10, eosinophil peroxidase and complement lytic activities and it also provokes a drastic increase of lymphocytes, monocytes and neutrophils in peripheral blood accompanied by a rapid intense migration of neutrophils to the peritoneal cavity. PLA2 catalyzes the calcium-dependent hydrolysis of the 2-acyl groups in 3-sn-phosphoglycerides. The polypeptide is Basic phospholipase A2 Cc2-PLA2 (Cerastes cerastes (Horned desert viper)).